A 263-amino-acid chain; its full sequence is Post-GPI attachment to proteins factor 2 (263 aa).

Helical transmembrane passes span 16 to 36, 69 to 89, 109 to 129, 143 to 163, 180 to 200, and 208 to 228; these read FVIC…ILSL, YIWR…AIAF, FLCN…LALT, CFGG…WLFN, YKIL…YLYW, and PGIY…NIFF.

Belongs to the PGAP2 family.

It is found in the golgi apparatus membrane. The protein localises to the endoplasmic reticulum membrane. Functionally, involved in the lipid remodeling steps of GPI-anchor maturation. Required for stable expression of GPI-anchored proteins at the cell surface. The sequence is that of Post-GPI attachment to proteins factor 2 from Caenorhabditis elegans.